Here is a 952-residue protein sequence, read N- to C-terminus: Isoleucine--tRNA ligase (952 aa).

Residues 58-68 carry the 'HIGH' region motif; it reads PYANGDIHIGH. Glu576 serves as a coordination point for L-isoleucyl-5'-AMP. Positions 617 to 621 match the 'KMSKS' region motif; sequence KMSKS. Residue Lys620 coordinates ATP. Residues Cys915, Cys918, Cys935, and Cys938 each contribute to the Zn(2+) site.

The protein belongs to the class-I aminoacyl-tRNA synthetase family. IleS type 1 subfamily. Monomer. Requires Zn(2+) as cofactor.

It localises to the cytoplasm. It carries out the reaction tRNA(Ile) + L-isoleucine + ATP = L-isoleucyl-tRNA(Ile) + AMP + diphosphate. Its function is as follows. Catalyzes the attachment of isoleucine to tRNA(Ile). As IleRS can inadvertently accommodate and process structurally similar amino acids such as valine, to avoid such errors it has two additional distinct tRNA(Ile)-dependent editing activities. One activity is designated as 'pretransfer' editing and involves the hydrolysis of activated Val-AMP. The other activity is designated 'posttransfer' editing and involves deacylation of mischarged Val-tRNA(Ile). This is Isoleucine--tRNA ligase from Aliivibrio fischeri (strain ATCC 700601 / ES114) (Vibrio fischeri).